The chain runs to 294 residues: uncharacterized protein (294 aa).

It is found in the mitochondrion. This is an uncharacterized protein from Zea mays (Maize).